Reading from the N-terminus, the 146-residue chain is Large ribosomal subunit protein bL19 (146 aa).

The protein belongs to the bacterial ribosomal protein bL19 family.

Its function is as follows. This protein is located at the 30S-50S ribosomal subunit interface and may play a role in the structure and function of the aminoacyl-tRNA binding site. In Bartonella bacilliformis (strain ATCC 35685 / KC583 / Herrer 020/F12,63), this protein is Large ribosomal subunit protein bL19.